Consider the following 808-residue polypeptide: DNA replication licensing factor MCM3 (808 aa).

Alanine 2 is modified (N-acetylalanine). Serine 160 and serine 275 each carry phosphoserine. An N6-acetyllysine modification is found at lysine 293. Residues 295-502 enclose the MCM domain; that stretch reads IFDQLARSLA…QDREISDHVL (208 aa). Residues glutamine 353, leucine 393, glutamate 394, alanine 395, and alanine 397 each coordinate ADP. An Arginine finger motif is present at residues 477–480; sequence SRFD. Alanine 523 provides a ligand contact to ATP. The residue at position 535 (serine 535) is a Phosphoserine; by ATM. Lysine 547 carries the post-translational modification N6-acetyllysine. Serine 611 is subject to Phosphoserine. The disordered stretch occupies residues 662-739; sequence KKRKKRSEDE…ETKESQKVEL (78 aa). Arginine 664 serves as a coordination point for ATP. 3 positions are modified to phosphoserine: serine 668, serine 672, and serine 681. Positions 679–688 are enriched in basic and acidic residues; that stretch reads EKSQEDQEQK. The residue at position 708 (tyrosine 708) is a Phosphotyrosine. Phosphothreonine is present on residues threonine 713 and threonine 722. The segment covering 727–739 has biased composition (basic and acidic residues); sequence DSQETKESQKVEL. A phosphoserine mark is found at serine 728 and serine 734.

The protein belongs to the MCM family. As to quaternary structure, component of the MCM2-7 complex. The complex forms a toroidal hexameric ring with the proposed subunit order MCM2-MCM6-MCM4-MCM7-MCM3-MCM5. Component of the CMG helicase complex, a hexameric ring of related MCM2-7 subunits stabilized by CDC45 and the tetrameric GINS complex. Associated with the replication-specific DNA polymerase alpha. Interacts with MCMBP. Interacts with ANKRD17. Interacts with MCM3AP isoform MCM3AP; this interaction leads to MCM3 acetylation. In terms of processing, acetylated by MCM3AP. Post-translationally, O-glycosylated (O-GlcNAcylated), in a cell cycle-dependent manner.

Its subcellular location is the nucleus. It is found in the chromosome. It catalyses the reaction ATP + H2O = ADP + phosphate + H(+). Functionally, acts as a component of the MCM2-7 complex (MCM complex) which is the replicative helicase essential for 'once per cell cycle' DNA replication initiation and elongation in eukaryotic cells. Core component of CDC45-MCM-GINS (CMG) helicase, the molecular machine that unwinds template DNA during replication, and around which the replisome is built. The active ATPase sites in the MCM2-7 ring are formed through the interaction surfaces of two neighboring subunits such that a critical structure of a conserved arginine finger motif is provided in trans relative to the ATP-binding site of the Walker A box of the adjacent subunit. The six ATPase active sites, however, are likely to contribute differentially to the complex helicase activity. Required for the entry in S phase and for cell division. The chain is DNA replication licensing factor MCM3 (MCM3) from Bos taurus (Bovine).